The primary structure comprises 262 residues: Phosphatidylglycerol--prolipoprotein diacylglyceryl transferase (262 aa).

4 consecutive transmembrane segments (helical) span residues 9-29 (LGPL…ILAV), 41-61 (IIPD…ILGA), 80-100 (IFAI…GALV), and 109-129 (LINT…AQSL). Arginine 131 lines the a 1,2-diacyl-sn-glycero-3-phospho-(1'-sn-glycerol) pocket. Helical transmembrane passes span 167-187 (QPTF…ILIF), 197-217 (GHIT…IEGM), and 227-247 (LRVS…IVIY).

Belongs to the Lgt family.

It localises to the cell membrane. The catalysed reaction is L-cysteinyl-[prolipoprotein] + a 1,2-diacyl-sn-glycero-3-phospho-(1'-sn-glycerol) = an S-1,2-diacyl-sn-glyceryl-L-cysteinyl-[prolipoprotein] + sn-glycerol 1-phosphate + H(+). Its pathway is protein modification; lipoprotein biosynthesis (diacylglyceryl transfer). Functionally, catalyzes the transfer of the diacylglyceryl group from phosphatidylglycerol to the sulfhydryl group of the N-terminal cysteine of a prolipoprotein, the first step in the formation of mature lipoproteins. This is Phosphatidylglycerol--prolipoprotein diacylglyceryl transferase from Streptococcus pneumoniae (strain JJA).